Consider the following 363-residue polypeptide: Trans-2,3-enoyl-CoA reductase-like (363 aa).

Ser37 carries the post-translational modification Phosphoserine. 4 consecutive transmembrane segments (helical) span residues 143–163 (WTTV…LFYL), 216–235 (NLLK…AYYI), 250–270 (VAIS…INVV), and 311–331 (ISFT…LMSI).

This sequence belongs to the steroid 5-alpha reductase family.

It localises to the membrane. It is found in the endoplasmic reticulum. This is Trans-2,3-enoyl-CoA reductase-like (TECRL) from Bos taurus (Bovine).